Here is a 69-residue protein sequence, read N- to C-terminus: uncharacterized protein (69 aa).

The chain crosses the membrane as a helical span at residues 32-54 (MLGAIDVAVAVASVPTLFVVTAI).

The protein localises to the membrane. This is an uncharacterized protein from Sinorhizobium fredii (strain NBRC 101917 / NGR234).